We begin with the raw amino-acid sequence, 116 residues long: uncharacterized protein (116 aa).

A helical membrane pass occupies residues 52–72 (VFCSANSVPLYLLLLTSALHF).

The protein localises to the mitochondrion membrane. This is an uncharacterized protein from Arabidopsis thaliana (Mouse-ear cress).